We begin with the raw amino-acid sequence, 360 residues long: MVEPANTVGLPVNPTPLLKDELDIVIPTIRNLDFLEMWRPFLQPYHLIIVQDGDPSKKIHVPEGYDYELYNRNDINRILGPKASCISFKDSACRCFGYMVSKKKYIFTIDDDCFVAKDPSGKAVNALEQHIKNLLCPSSPFFFNTLYDPYREGADFVRGYPFSLREGVSTAVSHGLWLNIPDYDAPTQLVKPKERNTRYVDAVMTIPKGTLFPMCGMNLAFDRDLIGPAMYFGLMGDGQPIGRYDDMWAGWCIKVICDHLSLGVKTGLPYIYHSKASNPFVNLKKEYKGIFWQEEIIPFFQNAKLSKEAVTVQQCYIELSKMVKEKLSSLDPYFDKLADAMVTWIEAWDELNPPAASGKA.

The residue at position 2 (Val-2) is an N-acetylvaline. The DXD motif motif lies at 110–112 (DDD). Arg-158 is a glycosylation site (N-linked (Glc...) arginine).

This sequence belongs to the RGP family. As to quaternary structure, heteromers with RGP1, RGP4 and RGP5. Mn(2+) is required as a cofactor. Requires Mg(2+) as cofactor. In terms of processing, reversibly glycosylated in vitro by UDP-glucose, UDP-xylose and UDP-galactose, but not UDP-mannose. Predominantly expressed in shoot and root apical meristems. Expressed in epidermal cells of leaves, inflorescence stems and seed coat. Expressed in pollen.

Its subcellular location is the cytoplasm. The protein resides in the cytosol. It localises to the golgi apparatus. The enzyme catalyses UDP-beta-L-arabinofuranose = UDP-beta-L-arabinopyranose. UDP-L-arabinose mutase involved in the biosynthesis of cell wall non-cellulosic polysaccharides. Catalyzes the interconvertion of UDP-L-arabinopyranose (UDP-Arap) and UDP-L-arabinofuranose (UDP-Araf) in vitro. Preferentially catalyzes the formation of UDP-Arap from UDP-Araf. At thermodynamic equilibrium in vitro the ratio of the pyranose form over the furanose form is 95:5. Is not active on other UDP-sugars (UDP-Gal, UDP-Xyl, UDP-Glc, GDP-Man and GDP-Fuc). Functions redundantly with RGP2 and is essential for proper cell walls and pollen development. Probably involved in the formation of the pectocellulosic cell wall layer intine. Is probably active as heteromer in vivo. In Arabidopsis thaliana (Mouse-ear cress), this protein is UDP-arabinopyranose mutase 2.